The chain runs to 1890 residues: Proteasome-associated protein ECM29 homolog (1890 aa).

18 HEAT repeats span residues 6 to 29 (NAEI…EKLE), 30 to 67 (AAVG…RLSS), 130 to 167 (DKLF…ICAN), 226 to 263 (FSDL…MLDF), 294 to 330 (RVRQ…TNTN), 334 to 354 (KVLA…ELVS), 355 to 395 (KVSK…SFPQ), 459 to 496 (GQQH…EYYA), 498 to 523 (ARYL…LYGT), 524 to 561 (SKKD…EQRR), 565 to 602 (PSFQ…SLEV), 685 to 722 (AKQL…FGLS), 776 to 813 (PQFV…AVEI), 843 to 882 (STKL…GDGE), 938 to 975 (DDFD…HCSQ), 980 to 1018 (LAKK…ISDS), 1118 to 1155 (PYLG…DSKE), and 1159 to 1196 (RYYW…RPNG). The residue at position 1213 (serine 1213) is a Phosphoserine. HEAT repeat units lie at residues 1271–1309 (AVAS…SSGS), 1313–1350 (PHLA…AQEA), 1378–1415 (SVLE…IRLG), 1416–1457 (KEMT…LAKE), 1497–1534 (DYMD…DVSP), 1541–1578 (LNLN…RLSS), 1583–1620 (PDRL…GLDR), and 1623–1660 (QICS…QLEA). Residues 1680–1702 (RKESDDEDEPNTSQELSADERNK) are disordered. Serine 1683 carries the phosphoserine modification. Threonine 1691 carries the phosphothreonine modification. Serine 1692 carries the post-translational modification Phosphoserine. HEAT repeat units follow at residues 1751–1788 (PVQV…EKKI) and 1826–1863 (KEAL…NLEK).

As to quaternary structure, associated with the proteasome.

It localises to the cytoplasm. This is Proteasome-associated protein ECM29 homolog from Drosophila melanogaster (Fruit fly).